The sequence spans 250 residues: MDNNNNNNNQQPPPTSVYPPGSAVTTVIPPPPSGSASIVTGGGATYHHLLQQQQQQLQMFWTYQRQEIEQVNDFKNHQLPLARIKKIMKADEDVRMISAEAPILFAKACELFILELTIRSWLHAEENKRRTLQKNDIAAAITRTDIFDFLVDIVPREEIKEEEDAASALGGGGMVAPAASGVPYYYPPMGQPAVPGGMMIGRPAMDPSGVYAQPPSQAWQSVWQNSAGGGDDVSYGSGGSSGHGNLDSQG.

Residues 1–10 (MDNNNNNNNQ) are compositionally biased toward low complexity. 2 disordered regions span residues 1 to 35 (MDNNNNNNNQQPPPTSVYPPGSAVTTVIPPPPSGS) and 209 to 250 (GVYA…DSQG). The segment covering 214-225 (PPSQAWQSVWQN) has biased composition (polar residues). Positions 227–242 (AGGGDDVSYGSGGSSG) are enriched in gly residues.

This sequence belongs to the NFYC/HAP5 subunit family. Heterotrimeric transcription factor composed of three components, NF-YA, NF-YB and NF-YC. NF-YB and NF-YC must interact and dimerize for NF-YA association and DNA binding. As to expression, ubiquitous. Present in etiolated seedlings.

The protein localises to the nucleus. Its function is as follows. Stimulates the transcription of various genes by recognizing and binding to a CCAAT motif in promoters. Involved in the abscisic acid (ABA) signaling pathway. This is Nuclear transcription factor Y subunit C-4 (NFYC4) from Arabidopsis thaliana (Mouse-ear cress).